The primary structure comprises 344 residues: Uroporphyrinogen decarboxylase (344 aa).

Residues 24–28 (RQAGR), Phe43, Asp74, Tyr151, Ser206, and His323 each bind substrate.

It belongs to the uroporphyrinogen decarboxylase family. As to quaternary structure, homodimer.

It localises to the cytoplasm. The enzyme catalyses uroporphyrinogen III + 4 H(+) = coproporphyrinogen III + 4 CO2. It functions in the pathway porphyrin-containing compound metabolism; protoporphyrin-IX biosynthesis; coproporphyrinogen-III from 5-aminolevulinate: step 4/4. Its function is as follows. Catalyzes the decarboxylation of four acetate groups of uroporphyrinogen-III to yield coproporphyrinogen-III. The polypeptide is Uroporphyrinogen decarboxylase (Rhodobacter capsulatus (Rhodopseudomonas capsulata)).